Reading from the N-terminus, the 332-residue chain is Glycerol-3-phosphate dehydrogenase [NAD(P)+] (332 aa).

The NADPH site is built by Trp-11, Arg-30, and Lys-108. Positions 108, 137, and 139 each coordinate sn-glycerol 3-phosphate. NADPH is bound at residue Ala-141. Residues Lys-192, Asp-245, Ser-255, Arg-256, and Asn-257 each coordinate sn-glycerol 3-phosphate. Lys-192 acts as the Proton acceptor in catalysis. Arg-256 provides a ligand contact to NADPH. Residues Val-280 and Glu-282 each coordinate NADPH.

The protein belongs to the NAD-dependent glycerol-3-phosphate dehydrogenase family.

The protein resides in the cytoplasm. The catalysed reaction is sn-glycerol 3-phosphate + NAD(+) = dihydroxyacetone phosphate + NADH + H(+). It catalyses the reaction sn-glycerol 3-phosphate + NADP(+) = dihydroxyacetone phosphate + NADPH + H(+). Its pathway is membrane lipid metabolism; glycerophospholipid metabolism. Functionally, catalyzes the reduction of the glycolytic intermediate dihydroxyacetone phosphate (DHAP) to sn-glycerol 3-phosphate (G3P), the key precursor for phospholipid synthesis. The protein is Glycerol-3-phosphate dehydrogenase [NAD(P)+] of Paraburkholderia phymatum (strain DSM 17167 / CIP 108236 / LMG 21445 / STM815) (Burkholderia phymatum).